The primary structure comprises 57 residues: Small ribosomal subunit protein bS21 (57 aa).

It belongs to the bacterial ribosomal protein bS21 family.

The protein is Small ribosomal subunit protein bS21 of Bacillus cytotoxicus (strain DSM 22905 / CIP 110041 / 391-98 / NVH 391-98).